The primary structure comprises 349 residues: Ferredoxin--NADP reductase 1 (349 aa).

FAD contacts are provided by Glu36, Lys44, Tyr48, Ile88, Leu123, Asp290, and Ser331.

The protein belongs to the ferredoxin--NADP reductase type 2 family. As to quaternary structure, homodimer. Requires FAD as cofactor.

It carries out the reaction 2 reduced [2Fe-2S]-[ferredoxin] + NADP(+) + H(+) = 2 oxidized [2Fe-2S]-[ferredoxin] + NADPH. In Bacillus mycoides (strain KBAB4) (Bacillus weihenstephanensis), this protein is Ferredoxin--NADP reductase 1.